The chain runs to 139 residues: Histone H3-like 5 (139 aa).

Positions 1–10 are enriched in polar residues; the sequence is MARTKQTARI. Positions 1 to 43 are disordered; that stretch reads MARTKQTARISTGGKAPRKQLAPKAARQSAPATGGVKKPHRFR. Lys-5 is modified (N6,N6,N6-trimethyllysine; alternate). N6,N6-dimethyllysine; alternate is present on Lys-5. An N6-methyllysine; alternate modification is found at Lys-5. Ser-11 bears the Phosphoserine mark. A Phosphothreonine modification is found at Thr-12. Lys-15 is modified (N6-acetyllysine). N6-methyllysine; alternate is present on residues Lys-19 and Lys-24. N6-acetyllysine; alternate is present on residues Lys-19 and Lys-24. Residue Ser-29 is modified to Phosphoserine. Lys-37 carries the post-translational modification N6,N6,N6-trimethyllysine; alternate. Lys-37 is modified (N6,N6-dimethyllysine; alternate). Lys-37 carries the N6-methyllysine; alternate modification.

Belongs to the histone H3 family. In terms of assembly, the nucleosome is a histone octamer containing two molecules each of H2A, H2B, H3 and H4 assembled in one H3-H4 heterotetramer and two H2A-H2B heterodimers. The octamer wraps approximately 147 bp of DNA.

The protein resides in the nucleus. It localises to the chromosome. In terms of biological role, core component of nucleosome. Nucleosomes wrap and compact DNA into chromatin, limiting DNA accessibility to the cellular machineries which require DNA as a template. Histones thereby play a central role in transcription regulation, DNA repair, DNA replication and chromosomal stability. DNA accessibility is regulated via a complex set of post-translational modifications of histones, also called histone code, and nucleosome remodeling. The polypeptide is Histone H3-like 5 (Arabidopsis thaliana (Mouse-ear cress)).